Consider the following 208-residue polypeptide: Ras-related protein Rab-6A (208 aa).

N-acetylserine is present on Ser2. Ser23, Val24, Gly25, Lys26, Thr27, Ser28, Asp39, Asn40, Tyr42, and Thr45 together coordinate GTP. Position 27 (Thr27) interacts with Mg(2+). The short motif at Arg32–Phe50 is the Switch 1 element. Residues Thr45 and Asp68 each contribute to the Mg(2+) site. Positions Thr69 to Ala88 match the Switch 2 motif. Residues Gly71, Asn126, Lys127, Asp129, Ser156, Ala157, and Lys158 each contribute to the GTP site. 2 S-geranylgeranyl cysteine lipidation sites follow: Cys206 and Cys208. The residue at position 208 (Cys208) is a Cysteine methyl ester.

The protein belongs to the small GTPase superfamily. Rab family. It depends on Mg(2+) as a cofactor.

Its subcellular location is the golgi apparatus membrane. It catalyses the reaction GTP + H2O = GDP + phosphate + H(+). Regulated by guanine nucleotide exchange factors (GEFs) which promote the exchange of bound GDP for free GTP. Regulated by GTPase activating proteins (GAPs) which increase the GTP hydrolysis activity. Inhibited by GDP dissociation inhibitors (GDIs). Functionally, the small GTPases Rab are key regulators of intracellular membrane trafficking, from the formation of transport vesicles to their fusion with membranes. Rabs cycle between an inactive GDP-bound form and an active GTP-bound form that is able to recruit to membranes different sets of downstream effectors directly responsible for vesicle formation, movement, tethering and fusion. RAB6A acts as a regulator of COPI-independent retrograde transport from the Golgi apparatus towards the endoplasmic reticulum (ER). The polypeptide is Ras-related protein Rab-6A (RAB6A) (Gallus gallus (Chicken)).